Reading from the N-terminus, the 801-residue chain is Phenylalanine--tRNA ligase beta subunit (801 aa).

Positions 39–147 (GGGLDQVVVA…SDLPLGVPLF (109 aa)) constitute a tRNA-binding domain. A B5 domain is found at 401 to 477 (VSHRTIRFRV…RLNGYDRIET (77 aa)). Mg(2+)-binding residues include D455, D461, E464, and E465. The FDX-ACB domain maps to 708–801 (SRFPDTFRDI…LVAKLGATIR (94 aa)).

It belongs to the phenylalanyl-tRNA synthetase beta subunit family. Type 1 subfamily. As to quaternary structure, tetramer of two alpha and two beta subunits. The cofactor is Mg(2+).

The protein localises to the cytoplasm. The enzyme catalyses tRNA(Phe) + L-phenylalanine + ATP = L-phenylalanyl-tRNA(Phe) + AMP + diphosphate + H(+). In Geobacter sulfurreducens (strain ATCC 51573 / DSM 12127 / PCA), this protein is Phenylalanine--tRNA ligase beta subunit.